The sequence spans 357 residues: U3 small nucleolar ribonucleoprotein protein LCP5 (357 aa).

Ser-2 carries the post-translational modification N-acetylserine. 2 disordered regions span residues 146–211 (STLV…YKPP) and 301–357 (NKAE…QRRL). Acidic residues predominate over residues 155-166 (DDSEDDESSEDE). The segment covering 171–183 (PNTSGIINTNKKS) has biased composition (polar residues). Composition is skewed to basic and acidic residues over residues 187 to 196 (RVEETAKQEN) and 348 to 357 (SAWDRAQRRL).

It is found in the nucleus. It localises to the nucleolus. In terms of biological role, component of the U3 small nucleolar ribonucleoprotein. Required for the early cleavages at sites A0, A1 and A2 of the pre-ribosomal RNA. Participates in ribosome biogenesis. This chain is U3 small nucleolar ribonucleoprotein protein LCP5 (LCP5), found in Saccharomyces cerevisiae (strain ATCC 204508 / S288c) (Baker's yeast).